We begin with the raw amino-acid sequence, 540 residues long: MDSLRFLRILLLSSSILLLSLRSTVTAGDIVHQDNLAPKKPGCENDFVLVKVQTWIDGVENEEFVGVGARFGKRIVSKEKNANQTHLVFANPRDSCTPLKNKLSGDVVIVERGNCRFTAKANNAEAAGASALLIINNQKELYKMVCEPDETDLDIQIPAVMLPQDAGASLQKMLANSSKVSAQLYSPRRPAVDVAEVFLWLMAIGTILCASYWSAWSAREAAIEHDKLLKDAIDEIPNTNDGGSGVVEINSISAIFFVVLASGFLVILYKLMSYWFVELLVVVFCIGGVEGLQTCLVALLSRWFQRAADTYVKVPFLGPISYLTLAVSPFCIVFAVLWAVYRVHSFAWIGQDVLGIALIITVLQIVHVPNLKVGTVLLSCAFLYDIFWVFVSKKLFHESVMIVVARGDKSGEDGIPMLLKIPRMFDPWGGYSIIGFGDILLPGLLIAFALRYDWLANKTLRTGYFIWAMVAYGLGLLITYVALNLMDGHGQPALLYIVPFTLGTMLTLARKRDDLWILWTKGEPERACPHHVRLEQCSEK.

The N-terminal stretch at 1–27 is a signal peptide; that stretch reads MDSLRFLRILLLSSSILLLSLRSTVTA. Residues 28–196 are Lumenal-facing; the sequence is GDIVHQDNLA…PRRPAVDVAE (169 aa). Asn-83 is a glycosylation site (N-linked (GlcNAc...) asparagine). In terms of domain architecture, PA spans 95-173; sequence SCTPLKNKLS…QDAGASLQKM (79 aa). Asn-176 carries an N-linked (GlcNAc...) asparagine glycan. A helical transmembrane segment spans residues 197–217; sequence VFLWLMAIGTILCASYWSAWS. Topologically, residues 218–248 are cytoplasmic; sequence AREAAIEHDKLLKDAIDEIPNTNDGGSGVVE. The chain crosses the membrane as a helical span at residues 249-269; it reads INSISAIFFVVLASGFLVILY. Topologically, residues 270–278 are lumenal; it reads KLMSYWFVE. A helical membrane pass occupies residues 279–299; that stretch reads LLVVVFCIGGVEGLQTCLVAL. Over 300–319 the chain is Cytoplasmic; the sequence is LSRWFQRAADTYVKVPFLGP. A helical membrane pass occupies residues 320 to 340; the sequence is ISYLTLAVSPFCIVFAVLWAV. Residues 341 to 345 are Lumenal-facing; sequence YRVHS. A helical transmembrane segment spans residues 346–366; the sequence is FAWIGQDVLGIALIITVLQIV. The Cytoplasmic portion of the chain corresponds to 367 to 370; that stretch reads HVPN. The chain crosses the membrane as a helical span at residues 371–391; the sequence is LKVGTVLLSCAFLYDIFWVFV. Residue Asp-385 is part of the active site. The Lumenal portion of the chain corresponds to 392 to 429; sequence SKKLFHESVMIVVARGDKSGEDGIPMLLKIPRMFDPWG. A helical transmembrane segment spans residues 430–450; sequence GYSIIGFGDILLPGLLIAFAL. The active site involves Asp-438. Residues 451-462 are Cytoplasmic-facing; that stretch reads RYDWLANKTLRT. A helical transmembrane segment spans residues 463-483; sequence GYFIWAMVAYGLGLLITYVAL. The Lumenal portion of the chain corresponds to 484–488; the sequence is NLMDG. Residues 489–509 form a helical membrane-spanning segment; it reads HGQPALLYIVPFTLGTMLTLA. Positions 492–494 match the PAL motif; it reads PAL. At 510-540 the chain is on the cytoplasmic side; it reads RKRDDLWILWTKGEPERACPHHVRLEQCSEK.

The protein belongs to the peptidase A22B family. In terms of processing, glycosylated. Ubiquitous.

Its subcellular location is the endosome membrane. In terms of biological role, intramembrane-cleaving aspartic protease (I-CLiP) that cleaves type II membrane signal peptides in the hydrophobic plane of the membrane. This chain is Signal peptide peptidase-like 2 (SPPL2), found in Arabidopsis thaliana (Mouse-ear cress).